We begin with the raw amino-acid sequence, 397 residues long: Enoyl-[acyl-carrier-protein] reductase [NADH] (397 aa).

NAD(+) contacts are provided by residues Gly-48–Tyr-53, Phe-74–Glu-75, Asp-111–Ala-112, and Leu-139–Ala-140. Tyr-225 lines the substrate pocket. Tyr-235 acts as the Proton donor in catalysis. Residues Lys-244 and Val-273–Thr-275 each bind NAD(+).

The protein belongs to the TER reductase family. Monomer.

It catalyses the reaction a 2,3-saturated acyl-[ACP] + NAD(+) = a (2E)-enoyl-[ACP] + NADH + H(+). It functions in the pathway lipid metabolism; fatty acid biosynthesis. Functionally, involved in the final reduction of the elongation cycle of fatty acid synthesis (FAS II). Catalyzes the reduction of a carbon-carbon double bond in an enoyl moiety that is covalently linked to an acyl carrier protein (ACP). This Pseudoalteromonas translucida (strain TAC 125) protein is Enoyl-[acyl-carrier-protein] reductase [NADH].